We begin with the raw amino-acid sequence, 195 residues long: Imidazoleglycerol-phosphate dehydratase (195 aa).

Belongs to the imidazoleglycerol-phosphate dehydratase family.

It localises to the cytoplasm. The enzyme catalyses D-erythro-1-(imidazol-4-yl)glycerol 3-phosphate = 3-(imidazol-4-yl)-2-oxopropyl phosphate + H2O. It participates in amino-acid biosynthesis; L-histidine biosynthesis; L-histidine from 5-phospho-alpha-D-ribose 1-diphosphate: step 6/9. This chain is Imidazoleglycerol-phosphate dehydratase, found in Cupriavidus taiwanensis (strain DSM 17343 / BCRC 17206 / CCUG 44338 / CIP 107171 / LMG 19424 / R1) (Ralstonia taiwanensis (strain LMG 19424)).